The primary structure comprises 294 residues: DNA replication complex GINS protein SLD5 (294 aa).

The protein belongs to the GINS4/SLD5 family. Component of the GINS complex which is a heterotetramer composed of SLD5, PSF1, PSF2 and PSF3. Interacts with PSF2.

It is found in the nucleus. Functionally, required for DNA replication. Functions as part of the GINS complex which plays an essential role in the initiation of DNA replication by binding to DNA replication origins and facilitating the assembly of the DNA replication machinery. In Saccharomyces cerevisiae (strain ATCC 204508 / S288c) (Baker's yeast), this protein is DNA replication complex GINS protein SLD5.